A 453-amino-acid chain; its full sequence is Glutamyl-tRNA(Gln) amidotransferase subunit A (453 aa).

Catalysis depends on charge relay system residues K56 and S131. S155 acts as the Acyl-ester intermediate in catalysis.

This sequence belongs to the amidase family. GatA subfamily. Heterotrimer of A, B and C subunits.

The enzyme catalyses L-glutamyl-tRNA(Gln) + L-glutamine + ATP + H2O = L-glutaminyl-tRNA(Gln) + L-glutamate + ADP + phosphate + H(+). In terms of biological role, allows the formation of correctly charged Gln-tRNA(Gln) through the transamidation of misacylated Glu-tRNA(Gln) in organisms which lack glutaminyl-tRNA synthetase. The reaction takes place in the presence of glutamine and ATP through an activated gamma-phospho-Glu-tRNA(Gln). The polypeptide is Glutamyl-tRNA(Gln) amidotransferase subunit A (Campylobacter jejuni subsp. jejuni serotype O:6 (strain 81116 / NCTC 11828)).